We begin with the raw amino-acid sequence, 318 residues long: NADH-ubiquinone oxidoreductase chain 1 (318 aa).

Helical transmembrane passes span 3–23 (TMNL…LTLV), 69–89 (ILYI…WTPL), 98–118 (FNLG…SILW), 135–155 (AVAQ…SILL), 171–191 (HLWL…STLA), 217–237 (AGPF…MNAL), 253–273 (ELFT…FLWI), and 294–314 (LPLT…ISSI).

This sequence belongs to the complex I subunit 1 family. Core subunit of respiratory chain NADH dehydrogenase (Complex I) which is composed of 45 different subunits.

The protein resides in the mitochondrion inner membrane. It catalyses the reaction a ubiquinone + NADH + 5 H(+)(in) = a ubiquinol + NAD(+) + 4 H(+)(out). In terms of biological role, core subunit of the mitochondrial membrane respiratory chain NADH dehydrogenase (Complex I) which catalyzes electron transfer from NADH through the respiratory chain, using ubiquinone as an electron acceptor. Essential for the catalytic activity and assembly of complex I. The sequence is that of NADH-ubiquinone oxidoreductase chain 1 (MT-ND1) from Papio hamadryas (Hamadryas baboon).